Here is a 153-residue protein sequence, read N- to C-terminus: 3-hydroxyacyl-[acyl-carrier-protein] dehydratase FabZ (153 aa).

Residue His-54 is part of the active site.

This sequence belongs to the thioester dehydratase family. FabZ subfamily.

The protein localises to the cytoplasm. It carries out the reaction a (3R)-hydroxyacyl-[ACP] = a (2E)-enoyl-[ACP] + H2O. Functionally, involved in unsaturated fatty acids biosynthesis. Catalyzes the dehydration of short chain beta-hydroxyacyl-ACPs and long chain saturated and unsaturated beta-hydroxyacyl-ACPs. The polypeptide is 3-hydroxyacyl-[acyl-carrier-protein] dehydratase FabZ (Shewanella loihica (strain ATCC BAA-1088 / PV-4)).